Reading from the N-terminus, the 234-residue chain is Polycomb group RING finger protein 5-A (234 aa).

An RING-type zinc finger spans residues 18-57 (CSICRGYLIKPTAVTECLHTFCKSCIVQHFEESNECPECG). The disordered stretch occupies residues 97-130 (FWRKHKIKSNGEDGPRAKKSRLSGEDDDGNGGDY).

Component of a PRC1-like complex.

It localises to the nucleus. Its function is as follows. Component of Polycomb group (PcG) multiprotein complexes; the complex class is required to maintain the transcriptionally repressive state of some genes. This is Polycomb group RING finger protein 5-A from Danio rerio (Zebrafish).